Consider the following 327-residue polypeptide: DNA repair protein XRCC4 (327 aa).

The interaction with IFFO1 stretch occupies residues 1-211 (MERKVSRISL…QLEKNLKPER (211 aa)). Serine 53 is modified (phosphoserine). Coiled coils occupy residues 133–153 (IAEK…LLRD) and 183–213 (LNEK…ERET). Interaction with LIG4 stretches follow at residues 179–210 (FILV…LKPE) and 179–211 (FILV…KPER). Phosphoserine is present on serine 192. A Glycyl lysine isopeptide (Lys-Gly) (interchain with G-Cter in SUMO) cross-link involves residue lysine 208. Position 226 is a phosphotyrosine (tyrosine 226). Residue serine 229 is modified to Phosphoserine. Phosphothreonine is present on threonine 230. 2 positions are modified to phosphoserine: serine 249 and serine 253. Positions 255-327 (DVTDIAPSRK…RNSSPEDIFD (73 aa)) are disordered. The Nuclear localization signal signature appears at 263–268 (RKRRHH). Lysine 289 is covalently cross-linked (Glycyl lysine isopeptide (Lys-Gly) (interchain with G-Cter in ubiquitin)). Residues serine 294, serine 295, serine 308, and serine 313 each carry the phosphoserine modification. Positions 308 to 327 (SAGNMSLETLRNSSPEDIFD) are enriched in polar residues. Threonine 316 is modified (phosphothreonine). Phosphoserine occurs at positions 320 and 321.

It belongs to the XRCC4-XLF family. XRCC4 subfamily. As to quaternary structure, homodimer and homotetramer in solution. Interacts with NHEJ1/XLF; the interaction is direct and is mediated via a head-to-head interaction between N-terminal head regions. Interacts with LIG4; the LIG4-XRCC4 subcomplex has a 1:2 stoichiometry and XRCC4 is required for LIG4 stability. Component of the core long-range non-homologous end joining (NHEJ) complex (also named DNA-PK complex) composed of PRKDC, LIG4, XRCC4, XRCC6/Ku70, XRCC5/Ku86 and NHEJ1/XLF. Additional component of the NHEJ complex includes PAXX. Following autophosphorylation, PRKDC dissociates from DNA, leading to formation of the short-range NHEJ complex, composed of LIG4, XRCC4, XRCC6/Ku70, XRCC5/Ku86 and NHEJ1/XLF. Interacts with PRKDC; the interaction is direct. Interacts with XRCC6/Ku70; the interaction is direct. Interacts with APTX and APLF. Forms a heterotetramer with IFFO1; the interaction involves LIG4-free XRCC4 and leads to the relocalization of IFFO1 to the sites of DNA damage. Interacts with PNKP; mainly interacts with PNKP when phosphorylated at Thr-230, but is also able to interact at much lower level with PNKP when not unphosphorylated. Interacts with POLL (DNA polymerase lambda). Interacts with XKR4; interacts with the processed form of XKR4, which is cleaved by caspase. Post-translationally, phosphorylated by PRKDC at the C-terminus in response to DNA damage; Ser-253 constitutes the main phosphorylation sites. Phosphorylations by PRKDC at the C-terminus of XRCC4 and NHEJ1/XLF are highly redundant and regulate ability of the XRCC4-NHEJ1/XLF subcomplex to bridge DNA. Phosphorylation by PRKDC does not prevent interaction with NHEJ1/XLF but disrupts ability to bridge DNA and promotes detachment from DNA. Phosphorylation at Ser-320 and Ser-321 by PRKDC promotes recognition by the SCF(FBXW7) complex and subsequent ubiquitination via 'Lys-63'-linked ubiquitin. Phosphorylation at Thr-230 by CK2 promotes interaction with PNKP; regulating PNKP activity and localization to DNA damage sites. Phosphorylation by CK2 promotes interaction with APTX. In terms of processing, ubiquitinated at Lys-289 by the SCF(FBXW7) complex via 'Lys-63'-linked ubiquitination, thereby promoting double-strand break repair: the SCF(FBXW7) complex specifically recognizes XRCC4 when phosphorylated at Ser-320 and Ser-321 by PRKDC, and 'Lys-63'-linked ubiquitination facilitates DNA non-homologous end joining (NHEJ) by enhancing association with XRCC5/Ku80 and XRCC6/Ku70. Monoubiquitinated. Undergoes proteolytic processing by caspase-3 (CASP3). This generates the protein XRCC4, C-terminus (XRCC4/C), which translocates to the cytoplasm and activates phospholipid scramblase activity of XKR4, thereby promoting phosphatidylserine exposure on apoptotic cell surface.

The protein resides in the nucleus. It is found in the chromosome. It localises to the cytoplasm. In terms of biological role, DNA non-homologous end joining (NHEJ) core factor, required for double-strand break repair and V(D)J recombination. Acts as a scaffold protein that regulates recruitment of other proteins to DNA double-strand breaks (DSBs). Associates with NHEJ1/XLF to form alternating helical filaments that bridge DNA and act like a bandage, holding together the broken DNA until it is repaired. The XRCC4-NHEJ1/XLF subcomplex binds to the DNA fragments of a DSB in a highly diffusive manner and robustly bridges two independent DNA molecules, holding the broken DNA fragments in close proximity to one other. The mobility of the bridges ensures that the ends remain accessible for further processing by other repair factors. Plays a key role in the NHEJ ligation step of the broken DNA during DSB repair via direct interaction with DNA ligase IV (LIG4): the LIG4-XRCC4 subcomplex reseals the DNA breaks after the gap filling is completed. XRCC4 stabilizes LIG4, regulates its subcellular localization and enhances LIG4's joining activity. Binding of the LIG4-XRCC4 subcomplex to DNA ends is dependent on the assembly of the DNA-dependent protein kinase complex DNA-PK to these DNA ends. Promotes displacement of PNKP from processed strand break termini. Its function is as follows. Acts as an activator of the phospholipid scramblase activity of XKR4. This form, which is generated upon caspase-3 (CASP3) cleavage, translocates into the cytoplasm and interacts with XKR4, thereby promoting phosphatidylserine scramblase activity of XKR4 and leading to phosphatidylserine exposure on apoptotic cell surface. The chain is DNA repair protein XRCC4 from Cricetulus griseus (Chinese hamster).